A 238-amino-acid chain; its full sequence is 6-phosphogluconolactonase (238 aa).

Belongs to the glucosamine/galactosamine-6-phosphate isomerase family. 6-phosphogluconolactonase subfamily.

It carries out the reaction 6-phospho-D-glucono-1,5-lactone + H2O = 6-phospho-D-gluconate + H(+). The protein operates within carbohydrate degradation; pentose phosphate pathway; D-ribulose 5-phosphate from D-glucose 6-phosphate (oxidative stage): step 2/3. Hydrolysis of 6-phosphogluconolactone to 6-phosphogluconate. The polypeptide is 6-phosphogluconolactonase (pgl) (Pseudomonas aeruginosa (strain ATCC 15692 / DSM 22644 / CIP 104116 / JCM 14847 / LMG 12228 / 1C / PRS 101 / PAO1)).